The sequence spans 897 residues: Echinoderm microtubule-associated protein-like 3 (897 aa).

Met-1 is modified (N-acetylmethionine). The stretch at 16-43 (LQTLSQRLRVQEEEMELVKAALAEALRL) forms a coiled coil. Polar residues predominate over residues 51–68 (TTLQGSGISAPTRNSSIT). Positions 51 to 210 (TTLQGSGISA…GGPGSRRSNY (160 aa)) are disordered. Low complexity-rich tracts occupy residues 96 to 108 (PSSG…NGPP), 118 to 132 (SGTQ…SSGA), and 155 to 164 (RNSSSSSSPS). Positions 175-190 (AASSANLLLRSGSTES) are enriched in polar residues. A phosphoserine mark is found at Ser-177, Ser-199, and Ser-205. WD repeat units lie at residues 235–287 (RSLE…LYRP), 296–345 (GGGQ…IWDS), 351–393 (LQEI…VWDC), 399–435 (LAEI…FWNW), 449–488 (RKQG…TWGR), 505–544 (YTIV…QWGP), 550–585 (QEAE…LRGD), 590–627 (FSPV…LWDG), 630–668 (HALA…VLDT), 675–710 (SDVT…IYSV), 717–756 (SSRF…YWDV), 766–824 (RYES…LFQY), and 831–870 (APSR…QWRV). The interval 876 to 897 (SGPAPATPSRTPSLSPASSLDV) is disordered. At Thr-882 the chain carries Phosphothreonine; by CDK1. The span at 883–897 (PSRTPSLSPASSLDV) shows a compositional bias: polar residues. Phosphoserine is present on Ser-884.

Belongs to the WD repeat EMAP family. In terms of assembly, homotrimer; self-association is mediated by the N-terminal coiled coil. Interacts with EML2 but not with EML1. Interacts (phosphorylated at Thr-882) with TUBG1, HAUS1, HAUS2, HAUS3, HAUS4, HAUS5, HAUS6, HAUS7 and HAUS8. Phosphorylation at Thr-882 during mitosis is required for interaction with TUBG1, HAUS1, HAUS2, HAUS3, HAUS4, HAUS5, HAUS6, HAUS7 and HAUS8 and their recruitment to spindle microtubules.

The protein resides in the cytoplasm. The protein localises to the cytoskeleton. It localises to the nucleus. It is found in the midbody. Its subcellular location is the spindle. In terms of biological role, regulates mitotic spindle assembly, microtubule (MT)-kinetochore attachment and chromosome separation via recruitment of HAUS augmin-like complex and TUBG1 to the existing MTs and promoting MT-based MT nucleation. Required for proper alignnment of chromosomes during metaphase. The chain is Echinoderm microtubule-associated protein-like 3 (Eml3) from Mus musculus (Mouse).